The sequence spans 210 residues: Thymidylate kinase (210 aa).

Residue 10–17 coordinates ATP; the sequence is GPEGAGKS.

The protein belongs to the thymidylate kinase family.

It catalyses the reaction dTMP + ATP = dTDP + ADP. In terms of biological role, phosphorylation of dTMP to form dTDP in both de novo and salvage pathways of dTTP synthesis. In Pseudomonas entomophila (strain L48), this protein is Thymidylate kinase.